The following is a 415-amino-acid chain: Alditol oxidase (415 aa).

Positions 12–179 constitute an FAD-binding PCMH-type domain; that stretch reads ITYTAKEVHR…TALTLDLEPA (168 aa). Position 46 is a pros-8alpha-FAD histidine (His-46). FAD contacts are provided by residues Ser-106, Ser-111, Gly-114, 118–121, and Val-169; that span reads TGTH. Ser-106 provides a ligand contact to xylitol. Residues Glu-317, Arg-319, and Thr-342 each contribute to the xylitol site. Arg-319 provides a ligand contact to FAD. His-369 lines the FAD pocket. Xylitol is bound at residue Lys-372.

Belongs to the oxygen-dependent FAD-linked oxidoreductase family. In terms of assembly, monomer. The cofactor is FAD.

The enzyme catalyses an alditol + O2 = an aldose + H2O2. It catalyses the reaction xylitol + O2 = D-xylose + H2O2. The catalysed reaction is D-sorbitol + O2 = D-glucose + H2O2. Functionally, oxidase that performs selective oxidation of the terminal primary hydroxyl group of several alditols, with a reduction of O2 to H2O2. Shows highest activity on xylitol and D-sorbitol, and to a lesser extent, can also use galactitol, D-mannitol, and D-arabitol as substrates in vitro. Is not active on D-glucose, D-xylose, D-galactose, D-mannose, D-fructose, L-sorbose, L-fucose, myoinositol, glycerol, ethyl alcohol, and meso-erythritol. This chain is Alditol oxidase, found in Streptomyces sp. (strain IKD472 / FERM P-14339).